Consider the following 569-residue polypeptide: Glutamine--tRNA ligase (569 aa).

A disordered region spans residues 1 to 23 (MSKDPMSKPTPEPAAHSKAGPAV). A 'HIGH' region motif is present at residues 50 to 60 (PEPNGYLHIGH). Residues 51–53 (EPN) and 57–63 (HIGHAKS) contribute to the ATP site. 2 residues coordinate L-glutamine: aspartate 83 and tyrosine 228. ATP is bound by residues threonine 247 and 277-278 (RL). The 'KMSKS' region signature appears at 284-288 (ITSKR).

Belongs to the class-I aminoacyl-tRNA synthetase family. Monomer.

The protein resides in the cytoplasm. The catalysed reaction is tRNA(Gln) + L-glutamine + ATP = L-glutaminyl-tRNA(Gln) + AMP + diphosphate. The chain is Glutamine--tRNA ligase from Pseudomonas syringae pv. tomato (strain ATCC BAA-871 / DC3000).